The sequence spans 261 residues: Probable membrane transporter protein PD_1894 (261 aa).

A run of 8 helical transmembrane segments spans residues 6–26, 45–64, 78–98, 99–119, 150–170, 175–195, 205–225, and 239–259; these read LIVTIGSGGLVGFALGLLGGG, HIAIGTSAVAVSVNAYANLI, VIFALVGTLGAFLGSSIGMLI, DGQRLLLLFGLLMAMVGLLML, AASGFFGIGGGFLIVPALIFA, TINAIGSSLLAVGSFGLITTL, WTIAMEFIVGGITGGGLGTLL, and VFGLIVIAVAIYVIWRSWASL.

Belongs to the 4-toluene sulfonate uptake permease (TSUP) (TC 2.A.102) family.

The protein localises to the cell membrane. This is Probable membrane transporter protein PD_1894 from Xylella fastidiosa (strain Temecula1 / ATCC 700964).